The sequence spans 553 residues: Putative transport protein YidE (553 aa).

The next 5 membrane-spanning stretches (helical) occupy residues 4 to 24, 28 to 48, 65 to 85, 95 to 115, and 158 to 178; these read IALT…IGNV, GIGL…HFVS, FGLI…FFAS, LFAV…HKLF, and MSYA…MWML. RCK C-terminal domains follow at residues 191-276 and 279-361; these read QQHE…VIGQ and DTSL…VLGN. The next 6 membrane-spanning stretches (helical) occupy residues 371–391, 393–413, 439–459, 464–484, 493–513, and 533–553; these read MLPV…PVFV, GFPA…ALIL, IVLF…NTLV, LSWI…VGIL, YLTM…LAFA, and LVMF…WSIG.

Belongs to the AAE transporter (TC 2.A.81) family. YidE subfamily.

It localises to the cell membrane. This is Putative transport protein YidE from Escherichia coli (strain ATCC 8739 / DSM 1576 / NBRC 3972 / NCIMB 8545 / WDCM 00012 / Crooks).